We begin with the raw amino-acid sequence, 50 residues long: Small ribosomal subunit protein eS31 (50 aa).

Residues C22, C25, C40, and C43 each contribute to the Zn(2+) site. The segment at 22–43 (CPRCGPGVFMADHGDRWACGKC) adopts a C4-type zinc-finger fold.

Belongs to the eukaryotic ribosomal protein eS31 family. In terms of assembly, part of the 30S ribosomal subunit. Requires Zn(2+) as cofactor.

The sequence is that of Small ribosomal subunit protein eS31 from Pyrococcus horikoshii (strain ATCC 700860 / DSM 12428 / JCM 9974 / NBRC 100139 / OT-3).